The primary structure comprises 417 residues: Phosphoglycerate kinase 1 (417 aa).

Position 2 is an N-acetylserine (Ser-2). Ser-2 and Ser-4 each carry phosphoserine. Lys-6 carries the post-translational modification N6-succinyllysine. Lys-11 carries the N6-acetyllysine modification. Residues Val-23, Asp-24, Phe-25, Asn-26, Gln-38, Arg-39, Ser-62, His-63, Gly-65, and Arg-66 each contribute to the (2R)-3-phosphoglycerate site. A mitochondrial targeting region exposed following cis-trans isomerization by PIN1 and recognized by the TOM complex for mitochondrial translocation of the protein region spans residues 38-43 (QRIKAA). Lys-75 bears the N6-acetyllysine mark. Phosphotyrosine is present on Tyr-76. Lys-86 and Lys-91 each carry N6-acetyllysine. Residue Lys-97 is modified to N6-(2-hydroxyisobutyryl)lysine; alternate. Residue Lys-97 is modified to N6-acetyllysine; alternate. Residues Leu-122 and Arg-123 each contribute to the (2R)-3-phosphoglycerate site. Lys-131 carries the post-translational modification N6-acetyllysine; alternate. An N6-malonyllysine; alternate modification is found at Lys-131. Lys-146 carries the post-translational modification N6-acetyllysine. (2R)-3-phosphoglycerate is bound by residues His-170 and Arg-171. Position 191 is an N6-succinyllysine (Lys-191). Position 196 is a phosphotyrosine (Tyr-196). Lys-199 carries the post-translational modification N6-acetyllysine. Ser-203 is subject to Phosphoserine. Gly-214 contributes to the ADP binding site. Gly-214 contributes to the CDP binding site. Ala-215 and Lys-216 together coordinate AMP. An ATP-binding site is contributed by Ala-215. Ala-215 serves as a coordination point for Mg(2+). At Lys-216 the chain carries N6-(2-hydroxyisobutyryl)lysine. Mg(2+) is bound by residues Ala-218 and Asp-219. CDP is bound at residue Asp-219. Lys-220 serves as a coordination point for AMP. Residue Lys-220 coordinates ATP. An N6-(2-hydroxyisobutyryl)lysine modification is found at Lys-220. Gly-238 lines the ADP pocket. Gly-238 is a CDP binding site. Gly-239 is an AMP binding site. ATP is bound at residue Gly-239. Lys-267 and Lys-291 each carry N6-acetyllysine. Gly-313 is a binding site for AMP. Gly-313 is a binding site for ATP. Lys-323 is subject to N6-(2-hydroxyisobutyryl)lysine. Residues Gly-338, Val-340, and Phe-343 each coordinate CDP. Residue Phe-343 participates in ADP binding. Position 344 (Glu-344) interacts with AMP. ATP-binding residues include Glu-344, Asp-375, and Thr-376. Asp-375 contacts Mg(2+).

The protein belongs to the phosphoglycerate kinase family. As to quaternary structure, monomer. Interacts with kinase MAPK1/ERK2; the interaction is direct, occurs under hypoxic conditions, and promotes its interaction with PIN1. Interacts with peptidyl-prolyl cis-trans isomerase PIN1; the interaction is direct, occurs under hypoxic conditions, and targets the protein to the mitochondrion by promoting interactions with the TOM complex. Interacts with mitochondrial circRNA mcPGK1 (via its 2nd stem-loop); the interaction is direct and targets the protein to the mitochondrion by promoting interactions with the TOM complex. Interacts with pyruvate dehydrogenase kinase PDK1; the interaction is direct, occurs under hypoxic conditions and leads to PDK1-mediated inhibition of pyruvate dehydrogenase complex activity. The cofactor is Mg(2+). In terms of processing, phosphorylated at Ser-203 by MAPK1/ERK2 under hypoxic conditions, which promotes its mitochondrial targeting.

The protein resides in the cytoplasm. It localises to the cytosol. The protein localises to the mitochondrion matrix. The enzyme catalyses (2R)-3-phosphoglycerate + ATP = (2R)-3-phospho-glyceroyl phosphate + ADP. It carries out the reaction L-seryl-[protein] + ATP = O-phospho-L-seryl-[protein] + ADP + H(+). The protein operates within carbohydrate degradation; glycolysis; pyruvate from D-glyceraldehyde 3-phosphate: step 2/5. Functionally, catalyzes one of the two ATP producing reactions in the glycolytic pathway via the reversible conversion of 1,3-diphosphoglycerate to 3-phosphoglycerate. Both L- and D- forms of purine and pyrimidine nucleotides can be used as substrates, but the activity is much lower on pyrimidines. In addition to its role as a glycolytic enzyme, it seems that PGK-1 acts as a polymerase alpha cofactor protein (primer recognition protein). Acts as a protein kinase when localized to the mitochondrion where it phosphorylates pyruvate dehydrogenase kinase PDK1 to inhibit pyruvate dehydrogenase complex activity and suppress the formation of acetyl-coenzyme A from pyruvate, and consequently inhibit oxidative phosphorylation and promote glycolysis. May play a role in sperm motility. In Notamacropus eugenii (Tammar wallaby), this protein is Phosphoglycerate kinase 1 (PGK1).